We begin with the raw amino-acid sequence, 469 residues long: MAFLMHLLVCVFGMGSWVTINGLWVELPLLVMELPEGWYLPSYLTVVIQLANIGPLLVTLLHHFRPSCLSEVPIIFTLLGVGTVTCIIFAFLWNMTSWVLDGHHSIAFLVLTFFLALVDCTSSVTFLPFMSRLPTYYLTTFFVGEGLSGLLPALVALAQGSGLTTCVNVTEISDSVPSPVPTRETDIAQGVPRALVSALPGMEAPLSHLESRYLPAHFSPLVFFLLLSIMMACCLVAFFVLQRQPRCWEASVEDLLNDQVTLHSIRPREENDLGPAGTVDSSQGQGYLEEKAAPCCPAHLAFIYTLVAFVNALTNGMLPSVQTYSCLSYGPVAYHLAATLSIVANPLASLVSMFLPNRSLLFLGVLSVLGTCFGGYNMAMAVMSPCPLLQGHWGGEVLIVASWVLFSGCLSYVKVMLGVVLRDLSRSALLWCGAAVQLGSLLGALLMFPLVNVLRLFSSADFCNLHCPA.

At 1–2 (MA) the chain is on the cytoplasmic side. Residues 3 to 23 (FLMHLLVCVFGMGSWVTINGL) form a helical membrane-spanning segment. Over 24 to 43 (WVELPLLVMELPEGWYLPSY) the chain is Extracellular. A helical transmembrane segment spans residues 44–64 (LTVVIQLANIGPLLVTLLHHF). The Cytoplasmic portion of the chain corresponds to 65–71 (RPSCLSE). The helical transmembrane segment at 72–92 (VPIIFTLLGVGTVTCIIFAFL) threads the bilayer. Residues 93–97 (WNMTS) lie on the Extracellular side of the membrane. N-linked (GlcNAc...) asparagine glycosylation occurs at Asn-94. The helical transmembrane segment at 98–118 (WVLDGHHSIAFLVLTFFLALV) threads the bilayer. Residues 119-137 (DCTSSVTFLPFMSRLPTYY) lie on the Cytoplasmic side of the membrane. The chain crosses the membrane as a helical span at residues 138 to 158 (LTTFFVGEGLSGLLPALVALA). Topologically, residues 159–220 (QGSGLTTCVN…SRYLPAHFSP (62 aa)) are extracellular. A glycan (N-linked (GlcNAc...) asparagine) is linked at Asn-168. The helical transmembrane segment at 221–241 (LVFFLLLSIMMACCLVAFFVL) threads the bilayer. Residues 242–292 (QRQPRCWEASVEDLLNDQVTLHSIRPREENDLGPAGTVDSSQGQGYLEEKA) lie on the Cytoplasmic side of the membrane. At Ser-251 the chain carries Phosphoserine. The helical transmembrane segment at 293 to 313 (APCCPAHLAFIYTLVAFVNAL) threads the bilayer. Topologically, residues 314 to 335 (TNGMLPSVQTYSCLSYGPVAYH) are extracellular. Residues 336–356 (LAATLSIVANPLASLVSMFLP) form a helical membrane-spanning segment. Topologically, residues 357 to 359 (NRS) are cytoplasmic. A helical transmembrane segment spans residues 360–380 (LLFLGVLSVLGTCFGGYNMAM). Residues 381 to 396 (AVMSPCPLLQGHWGGE) lie on the Extracellular side of the membrane. Cys-386 and Cys-463 are disulfide-bonded. Residues 397-417 (VLIVASWVLFSGCLSYVKVML) traverse the membrane as a helical segment. Over 418–427 (GVVLRDLSRS) the chain is Cytoplasmic. A helical membrane pass occupies residues 428–448 (ALLWCGAAVQLGSLLGALLMF). Residues 449–469 (PLVNVLRLFSSADFCNLHCPA) are Extracellular-facing.

It belongs to the riboflavin transporter family. Predominantly expressed in testis. Highly expressed in small intestine and prostate.

Its subcellular location is the apical cell membrane. The protein localises to the cell membrane. It is found in the nucleus membrane. It localises to the cytoplasm. It catalyses the reaction riboflavin(in) = riboflavin(out). Activity is strongly inhibited by riboflavin analogs, such as lumiflavin, flavin mononucleotide (FMN), flavin adenine dinucleotide (FAD), by methylene blue, and to a lesser extent by amiloride. Riboflavin transport is Na(+)-independent at low pH but significantly reduced by Na(+) depletion under neutral pH conditions. Functionally, plasma membrane transporter mediating the uptake by cells of the water soluble vitamin B2/riboflavin that plays a key role in biochemical oxidation-reduction reactions of the carbohydrate, lipid, and amino acid metabolism. Humans are unable to synthesize vitamin B2/riboflavin and must obtain it via intestinal absorption. This is Solute carrier family 52, riboflavin transporter, member 3 (SLC52A3) from Homo sapiens (Human).